A 266-amino-acid chain; its full sequence is Undecaprenyl-diphosphatase (266 aa).

8 helical membrane-spanning segments follow: residues 1–21 (MDTFQVIILALIQGLTEFLPI), 39–59 (QGLSFDVAVNTGSLFAVVIYF), 87–107 (WWIILATLPAVFFGFLAKDFI), 114–134 (AEVIAVTTVVFGLLLWWADKM), 149–169 (ALLIGFAQALALIPGTSRSGA), 183–203 (AAARFSFLMSVPVSLGAAILV), 218–238 (ALILGTLISFVAAYACIHYFL), and 246–266 (MTPFVIYRLALGAVLCGFIFF).

This sequence belongs to the UppP family.

It is found in the cell inner membrane. It catalyses the reaction di-trans,octa-cis-undecaprenyl diphosphate + H2O = di-trans,octa-cis-undecaprenyl phosphate + phosphate + H(+). In terms of biological role, catalyzes the dephosphorylation of undecaprenyl diphosphate (UPP). Confers resistance to bacitracin. The polypeptide is Undecaprenyl-diphosphatase (Shewanella baltica (strain OS223)).